A 329-amino-acid chain; its full sequence is Replication factor C small subunit 1 (329 aa).

Residue 44–51 participates in ATP binding; that stretch reads GPPGTGKT.

This sequence belongs to the activator 1 small subunits family. RfcS subfamily. As to quaternary structure, heteromultimer composed of small subunits (RfcS) and large subunits (RfcL).

Functionally, part of the RFC clamp loader complex which loads the PCNA sliding clamp onto DNA. This Pyrobaculum arsenaticum (strain DSM 13514 / JCM 11321 / PZ6) protein is Replication factor C small subunit 1.